A 916-amino-acid chain; its full sequence is DNA mismatch repair protein MutS (916 aa).

G665–S672 serves as a coordination point for ATP.

It belongs to the DNA mismatch repair MutS family.

Functionally, this protein is involved in the repair of mismatches in DNA. It is possible that it carries out the mismatch recognition step. This protein has a weak ATPase activity. The polypeptide is DNA mismatch repair protein MutS (Bradyrhizobium sp. (strain ORS 278)).